The sequence spans 379 residues: Putative glutamate--cysteine ligase 2 (379 aa).

It belongs to the glutamate--cysteine ligase type 2 family. YbdK subfamily.

The catalysed reaction is L-cysteine + L-glutamate + ATP = gamma-L-glutamyl-L-cysteine + ADP + phosphate + H(+). Its function is as follows. ATP-dependent carboxylate-amine ligase which exhibits weak glutamate--cysteine ligase activity. The polypeptide is Putative glutamate--cysteine ligase 2 (Roseiflexus castenholzii (strain DSM 13941 / HLO8)).